The chain runs to 458 residues: ATP synthase subunit beta (458 aa).

An ATP-binding site is contributed by 148–155; it reads GGAGVGKT.

It belongs to the ATPase alpha/beta chains family. As to quaternary structure, F-type ATPases have 2 components, CF(1) - the catalytic core - and CF(0) - the membrane proton channel. CF(1) has five subunits: alpha(3), beta(3), gamma(1), delta(1), epsilon(1). CF(0) has three main subunits: a(1), b(2) and c(9-12). The alpha and beta chains form an alternating ring which encloses part of the gamma chain. CF(1) is attached to CF(0) by a central stalk formed by the gamma and epsilon chains, while a peripheral stalk is formed by the delta and b chains.

The protein resides in the cell inner membrane. The catalysed reaction is ATP + H2O + 4 H(+)(in) = ADP + phosphate + 5 H(+)(out). In terms of biological role, produces ATP from ADP in the presence of a proton gradient across the membrane. The catalytic sites are hosted primarily by the beta subunits. The sequence is that of ATP synthase subunit beta from Ectopseudomonas mendocina (strain ymp) (Pseudomonas mendocina).